A 279-amino-acid chain; its full sequence is Diaminopimelate epimerase (279 aa).

The substrate site is built by asparagine 13 and asparagine 66. Residue cysteine 75 is the Proton donor of the active site. Substrate is bound by residues 76–77, asparagine 162, asparagine 195, and 213–214; these read GN and ER. Cysteine 222 functions as the Proton acceptor in the catalytic mechanism. Residue 223–224 participates in substrate binding; that stretch reads GT.

This sequence belongs to the diaminopimelate epimerase family. Homodimer.

Its subcellular location is the cytoplasm. The enzyme catalyses (2S,6S)-2,6-diaminopimelate = meso-2,6-diaminopimelate. It participates in amino-acid biosynthesis; L-lysine biosynthesis via DAP pathway; DL-2,6-diaminopimelate from LL-2,6-diaminopimelate: step 1/1. Its function is as follows. Catalyzes the stereoinversion of LL-2,6-diaminopimelate (L,L-DAP) to meso-diaminopimelate (meso-DAP), a precursor of L-lysine and an essential component of the bacterial peptidoglycan. The sequence is that of Diaminopimelate epimerase from Synechocystis sp. (strain ATCC 27184 / PCC 6803 / Kazusa).